A 643-amino-acid polypeptide reads, in one-letter code: Macrolide export ATP-binding/permease protein MacB (643 aa).

The region spanning 4 to 242 is the ABC transporter domain; sequence IEIKELNRYF…VNNQSKAKSR (239 aa). An ATP-binding site is contributed by 40 to 47; sequence GQSGSGKS. 4 consecutive transmembrane segments (helical) span residues 269 to 289, 523 to 543, 572 to 592, and 603 to 623; these read LLTMLGIIIGITSVVSVVALG, IAFISLIVGGIGVMNIMLVSV, ILICMIGGISGIMLSLIIGGI, and VFSTFSIVAAVLCSTLIGVIF.

This sequence belongs to the ABC transporter superfamily. Macrolide exporter (TC 3.A.1.122) family. Homodimer. Part of the tripartite efflux system MacAB-TolC, which is composed of an inner membrane transporter, MacB, a periplasmic membrane fusion protein, MacA, and an outer membrane component, TolC. The complex forms a large protein conduit and can translocate molecules across both the inner and outer membranes. Interacts with MacA.

Its subcellular location is the cell inner membrane. Part of the tripartite efflux system MacAB-TolC. MacB is a non-canonical ABC transporter that contains transmembrane domains (TMD), which form a pore in the inner membrane, and an ATP-binding domain (NBD), which is responsible for energy generation. Confers resistance against macrolides. The polypeptide is Macrolide export ATP-binding/permease protein MacB (Mannheimia succiniciproducens (strain KCTC 0769BP / MBEL55E)).